Here is a 179-residue protein sequence, read N- to C-terminus: MDIILLERINRLGQIGDIVSVKDGYARNFLLPKGKALRANEANKKFFETQRIKLEARNLECKNEAQKIAERLNGKSFIVVRSAGETGQLYGSVSTRDITDIITMDGFSIERNQIELNHPIKTIGLHPVTLNLHPEVQISVTIHVARSANEAQLQEEAKILTSVEATEIVQEQPLEENIG.

The protein belongs to the bacterial ribosomal protein bL9 family.

In terms of biological role, binds to the 23S rRNA. The chain is Large ribosomal subunit protein bL9 from Bartonella bacilliformis (strain ATCC 35685 / KC583 / Herrer 020/F12,63).